An 84-amino-acid polypeptide reads, in one-letter code: UPF0320 protein YNR077C (84 aa).

Belongs to the UPF0320 family.

This chain is UPF0320 protein YNR077C, found in Saccharomyces cerevisiae (strain ATCC 204508 / S288c) (Baker's yeast).